A 520-amino-acid polypeptide reads, in one-letter code: GMP synthase [glutamine-hydrolyzing] (520 aa).

Residues K13–D205 form the Glutamine amidotransferase type-1 domain. C90 serves as the catalytic Nucleophile. Catalysis depends on residues H179 and E181. The GMPS ATP-PPase domain maps to W206–R395. S233–S239 provides a ligand contact to ATP.

As to quaternary structure, homodimer.

It catalyses the reaction XMP + L-glutamine + ATP + H2O = GMP + L-glutamate + AMP + diphosphate + 2 H(+). Its pathway is purine metabolism; GMP biosynthesis; GMP from XMP (L-Gln route): step 1/1. Catalyzes the synthesis of GMP from XMP. In Streptococcus pneumoniae serotype 2 (strain D39 / NCTC 7466), this protein is GMP synthase [glutamine-hydrolyzing].